The chain runs to 314 residues: Acetaldehyde dehydrogenase 3 (314 aa).

Cys-132 functions as the Acyl-thioester intermediate in the catalytic mechanism. Residues 163–171 and Asn-291 each bind NAD(+); that span reads SAGPGTRAN.

The protein belongs to the acetaldehyde dehydrogenase family.

It catalyses the reaction acetaldehyde + NAD(+) + CoA = acetyl-CoA + NADH + H(+). The chain is Acetaldehyde dehydrogenase 3 from Dechloromonas aromatica (strain RCB).